The following is a 29-amino-acid chain: NADH dehydrogenase [ubiquinone] 1 beta subcomplex subunit 10 (29 aa).

Positions Gly1–Leu29 are disordered.

The protein belongs to the complex I NDUFB10 subunit family. Complex I is composed of about 45 different subunits.

The protein resides in the mitochondrion inner membrane. Its function is as follows. Accessory subunit of the mitochondrial membrane respiratory chain NADH dehydrogenase (Complex I), that is believed not to be involved in catalysis. Complex I functions in the transfer of electrons from NADH to the respiratory chain. The immediate electron acceptor for the enzyme is believed to be ubiquinone. This is NADH dehydrogenase [ubiquinone] 1 beta subcomplex subunit 10 from Solanum tuberosum (Potato).